Consider the following 68-residue polypeptide: Large ribosomal subunit protein uL29 (68 aa).

This sequence belongs to the universal ribosomal protein uL29 family.

This is Large ribosomal subunit protein uL29 from Persephonella marina (strain DSM 14350 / EX-H1).